A 329-amino-acid polypeptide reads, in one-letter code: Secretory carrier-associated membrane protein 2 (329 aa).

Disordered regions lie at residues Met-1 to Pro-21 and Val-51 to Pro-72. Over Met-1–Tyr-153 the chain is Cytoplasmic. Residues Tyr-154–Phe-174 traverse the membrane as a helical segment. Over Ser-175–Gly-181 the chain is Lumenal. The helical transmembrane segment at Val-182–Trp-202 threads the bilayer. Over Tyr-203 to Phe-218 the chain is Cytoplasmic. Residues Tyr-203–Phe-218 form an interaction with SLC9A7 region. A helical transmembrane segment spans residues Phe-219 to Ile-239. The Lumenal portion of the chain corresponds to Pro-240–Ser-262. Residues Val-263–Leu-283 traverse the membrane as a helical segment. The Cytoplasmic segment spans residues Gln-284–Asn-329. A phosphoserine mark is found at Ser-319 and Ser-320.

This sequence belongs to the SCAMP family. As to quaternary structure, interacts with SLC6A4 and SLC9A7. Interacts with SLC9A5; this interaction regulates SLC9A5 cell-surface targeting and SLC9A5 activity. As to expression, widely expressed.

Its subcellular location is the golgi apparatus. The protein resides in the trans-Golgi network membrane. It is found in the recycling endosome membrane. In terms of biological role, functions in post-Golgi recycling pathways. Acts as a recycling carrier to the cell surface. This is Secretory carrier-associated membrane protein 2 (SCAMP2) from Homo sapiens (Human).